Here is a 313-residue protein sequence, read N- to C-terminus: Acetaldehyde dehydrogenase 1 (313 aa).

NAD(+) is bound at residue S16–I19. The Acyl-thioester intermediate role is filled by C131. NAD(+)-binding positions include S162–N170 and N281.

Belongs to the acetaldehyde dehydrogenase family.

The enzyme catalyses acetaldehyde + NAD(+) + CoA = acetyl-CoA + NADH + H(+). In Mycobacterium sp. (strain JLS), this protein is Acetaldehyde dehydrogenase 1.